The sequence spans 483 residues: Cyclic AMP-dependent transcription factor ATF-7 (483 aa).

The transactivation domain stretch occupies residues 1–285 (MGDDRPFVCN…GMVVGSASTM (285 aa)). The segment at 7–31 (FVCNAPGCGQRFTNEDHLAVHKHKH) adopts a C2H2-type zinc-finger fold. Thr51 bears the Phosphothreonine; by MAPK11 mark. Thr53 and Thr101 each carry phosphothreonine. Lys107 participates in a covalent cross-link: Glycyl lysine isopeptide (Lys-Gly) (interchain with G-Cter in SUMO1). Disordered stretches follow at residues 110–148 (EPVE…TPTP) and 299–345 (HPDA…NRAA). Composition is skewed to low complexity over residues 114–126 (VDSS…ASSP) and 307–320 (QPQV…PSTG). Residues 326–343 (TVDEDPDERRQRFLERNR) are compositionally biased toward basic and acidic residues. Residues 332–395 (DERRQRFLER…AQLKQLLLAH (64 aa)) enclose the bZIP domain. Residues 334-354 (RRQRFLERNRAAASRCRQKRK) are basic motif. Residues 360–388 (LEKKAEELTSQNIQLSNEVTLLRNEVAQL) are leucine-zipper. Disordered regions lie at residues 407–440 (TQGY…SNGL) and 464–483 (LSMP…SAGR). 2 positions are modified to phosphoserine: Ser413 and Ser423. The segment covering 429–440 (QHSSATAPSNGL) has biased composition (polar residues).

The protein belongs to the bZIP family. In terms of assembly, homodimer; binds DNA as homodimer. Heterodimer; heterodimerizes with other members of ATF family and with JUN family members. Interacts with JNK2; the interaction does not phosphorylate ATF7 but acts as a docking site for other ATF-associated partners such as JUN family members. Interacts (via its transactivation domain) with TAF12 (isoforms TAFII15 and TAFII20); the interaction potentiates the transactivation activity (isoform TAFII20 only) and is inhibited by ATF7 sumoylation. Interacts with TAF4; the interaction inhibits the TAF12-dependent transactivation. Interacts with MAPK9; the interaction does not phosphorylate ATF7 but acts as a docking site for ATF7-associated partners such as JUN. Interacts with Ku complex components XRCC6 and XRCC7. Interacts with TERT. Post-translationally, on EGF stimulation, phosphorylated first on Thr-53 allowing subsequent phosphorylation on Thr-51. This latter phosphorylation prevents sumoylation, increases binding to TAF12 and enhances transcriptional activity. Social isolation stress as well as TNF-alpha also induce the phosphorylation of ATF7. Phosphorylated in proliferating colonic and small intestinal epithelial cells. Sumoylation delays nuclear localization and inhibits transactivation activity through preventing binding to TAF12. RANBP2 appears to be the specific E3 ligase.

Its subcellular location is the nucleus. The protein resides in the nucleoplasm. It localises to the chromosome. The protein localises to the telomere. Stress-responsive chromatin regulator that plays a role in various biological processes including innate immunological memory, adipocyte differentiation or telomerase regulation. In absence of stress, contributes to the formation of heterochromatin and heterochromatin-like structure by recruiting histone H3K9 tri- and di-methyltransferases thus silencing the transcription of target genes such as STAT1 in adipocytes, or genes involved in innate immunity in macrophages and adipocytes. Stress induces ATF7 phosphorylation that disrupts interactions with histone methyltransferase and enhances the association with coactivators containing histone acetyltransferase and/or histone demethylase, leading to disruption of the heterochromatin-like structure and subsequently transcriptional activation. In response to TNF-alpha, which is induced by various stresses, phosphorylated ATF7 and telomerase are released from telomeres leading to telomere shortening. Plays also a role in maintaining epithelial regenerative capacity and protecting against cell death during intestinal epithelial damage and repair. The protein is Cyclic AMP-dependent transcription factor ATF-7 (ATF7) of Pongo abelii (Sumatran orangutan).